A 278-amino-acid chain; its full sequence is Protein canopy homolog 3 (278 aa).

Residues 1-30 (MDSMPEPASRCLLLLPLLLLLLLLLPAPEL) form the signal peptide. The Saposin B-type domain occupies 47–271 (SKCEVCKYVA…EGIQKASPLT (225 aa)). 3 disulfide bridges follow: Cys-49–Cys-206, Cys-52–Cys-194, and Cys-104–Cys-166. Asn-153 carries an N-linked (GlcNAc...) asparagine glycan. Residues 153–179 (NETSAEVADLKKQCDVLVEEFEEVIED) adopt a coiled-coil conformation. The segment at 215–278 (KGDTAALGGK…PLTHSPPDEL (64 aa)) is disordered. Residues 233-243 (AKAAGGRSSSS) show a composition bias toward low complexity.

The protein belongs to the canopy family. As to quaternary structure, interacts with HSP90B1; this interaction is disrupted in the presence of ATP. Interacts with TLR1, TLR2, TLR4 and TLR9. Strongest interaction with TLR4.

The protein localises to the endoplasmic reticulum. Toll-like receptor (TLR)-specific co-chaperone for HSP90B1. Required for proper TLR folding, except that of TLR3, and hence controls TLR exit from the endoplasmic reticulum. Consequently, required for both innate and adaptive immune responses. In Homo sapiens (Human), this protein is Protein canopy homolog 3 (CNPY3).